Reading from the N-terminus, the 2974-residue chain is Mediator of RNA polymerase II transcription subunit 13 (2974 aa).

4 stretches are compositionally biased toward basic and acidic residues: residues 284–299, 340–367, 374–390, and 624–633; these read EKEP…KTPE, MFEP…AREV, RREE…RADD, and SREKRKEYQP. Disordered regions lie at residues 284-309, 340-394, 624-654, 677-749, 764-801, 1032-1063, 1099-1134, 1140-1159, 1281-1342, 1416-1486, 2052-2078, and 2247-2309; these read EKEP…PQTT, MFEP…NLED, SREK…KRKV, FNAW…FADI, LYNP…PKEE, PHGS…QDGE, GMLS…YPTP, LQAD…FRST, TLAR…TPTY, QGGL…DATA, ELKK…ATPA, and QDEA…PAGM. The stretch at 351–396 forms a coiled coil; that stretch reads KEETAAEKEKRMAAREVRRLRRQRREERRREMEKQRRADDNLEDYD. Basic residues-rich tracts occupy residues 634–654 and 677–688; these read YHRK…KRKV and FNAWKQKKKGPP. A compositionally biased stretch (basic and acidic residues) spans 689 to 717; the sequence is PKKDLAKKEAAADKDKDKDKEKDKEKDKD. Residues 1035-1048 show a composition bias toward basic and acidic residues; that stretch reads SFDHDSEPEFDEQR. Composition is skewed to polar residues over residues 1122 to 1134 and 1140 to 1149; these read IESQ…YPTP and LQADASQAHS. 2 stretches are compositionally biased toward pro residues: residues 1284–1299 and 1326–1340; these read RPPP…PTPM and PAYP…PTTP. The span at 1443 to 1464 shows a compositional bias: polar residues; it reads IRNTDAPNDPTVSKLQSAVSRN. The span at 1473–1486 shows a compositional bias: low complexity; it reads AATSIPTATDDATA. The span at 2064–2073 shows a compositional bias: polar residues; sequence STQSENSEGN. Residues 2220 to 2301 are a coiled coil; the sequence is AVEGRLKRQK…EQYPAEESQA (82 aa). 2 stretches are compositionally biased toward basic and acidic residues: residues 2247-2258 and 2281-2292; these read QDEADKREKMDE and EEKKRNKQKENE. Residues 2347 to 2974 form a mediates transcriptional repression region; that stretch reads WKQRDTRVQN…LYHSVARLLV (628 aa).

It belongs to the Mediator complex subunit 13 family. In terms of assembly, component of the Mediator complex.

The protein localises to the nucleus. Its function is as follows. Component of the Mediator complex, a coactivator involved in regulated gene transcription of nearly all RNA polymerase II-dependent genes. Mediator functions as a bridge to convey information from gene-specific regulatory proteins to the basal RNA polymerase II transcription machinery. Mediator is recruited to promoters by direct interactions with regulatory proteins and serves as a scaffold for the assembly of a functional preinitiation complex with RNA polymerase II and the general transcription factors. The sequence is that of Mediator of RNA polymerase II transcription subunit 13 (let-19) from Caenorhabditis briggsae.